A 1299-amino-acid polypeptide reads, in one-letter code: GRB10-interacting GYF protein 2 (1299 aa).

Residue Ala2 is modified to N-acetylalanine. Ser19, Ser26, and Ser30 each carry phosphoserine. Positions 40-50 (DYRYGREEMLA) match the 4EHP-binding motif motif. Arg107, Arg118, and Arg120 each carry omega-N-methylarginine. A disordered region spans residues 112–131 (TVVGAPRGRSSSRGRGRGRG). Ser139 carries the phosphoserine modification. 3 disordered regions span residues 147 to 195 (FGRG…RKHE), 214 to 247 (EDED…GWRE), and 266 to 433 (RGYR…VADV). Arg149 carries the post-translational modification Omega-N-methylarginine. The span at 151 to 182 (GGREMHRSQSWEERGDRRFEKPGRKDVGRPNF) shows a compositional bias: basic and acidic residues. Phosphoserine is present on residues Ser160, Ser189, and Ser236. Residues 225 to 247 (SRRDGERWRPHSPDGPRSAGWRE) show a composition bias toward basic and acidic residues. The DDX6 binding motif motif lies at 280–310 (DDRDSLPEWCLEDAEEEMGTFDSSGAFLSLK). A compositionally biased stretch (acidic residues) spans 289 to 298 (CLEDAEEEMG). Composition is skewed to basic and acidic residues over residues 312-329 (VQKE…RPVD) and 338-363 (EGSH…DRVG). Residues 369-392 (ETPQTSSSSARPGTPSDHQSQEAS) show a composition bias toward polar residues. The residue at position 382 (Thr382) is a Phosphothreonine. Ser388 carries the phosphoserine modification. The span at 393–414 (QFERKDEPKTEQTEKAEEETRM) shows a compositional bias: basic and acidic residues. Residues 533-581 (MQKWYYKDPQGEIQGPFNNQEMAEWFQAGYFTMSLLVKRACDESFQPLG) enclose the GYF domain. The required for GRB10-binding stretch occupies residues 547–563 (GPFNNQEMAEWFQAGYF). Ser593 is subject to Phosphoserine. Disordered regions lie at residues 733–793 (KAAK…QEEA), 845–866 (EEAA…ENRL), 872–891 (AARL…EVQR), 917–936 (QLAQ…SNTT), 957–997 (ERQL…KPSG), 1009–1048 (EARQ…VWGS), and 1084–1112 (KEVG…NRQN). The segment at 860-919 (RLEENRLRMEEEAARLRHEEEERKRKELEVQRQKELMRQRQQQQEALRRLQQQQQQQQLA) is required for interaction with SARS-CoV-2 non-structural protein 2 (nsp2). The segment covering 924–936 (PSSSTWGQQSNTT) has biased composition (polar residues). Positions 957-972 (ERQLREEQRRQQRELM) are enriched in basic and acidic residues. Ser993 carries the post-translational modification Phosphoserine. Residues 1013-1025 (MQKQQQQQQQHQQ) show a composition bias toward low complexity. Over residues 1026–1048 (PNRARNNTHSNLHTSIGNSVWGS) the composition is skewed to polar residues. Residues 1090 to 1104 (NSTNKNKNNASLSKS) show a composition bias toward low complexity. Residue Lys1123 forms a Glycyl lysine isopeptide (Lys-Gly) (interchain with G-Cter in SUMO2) linkage. 2 disordered regions span residues 1195-1230 (RAKQ…QQDS) and 1247-1271 (QSNN…KMVR). The span at 1202–1217 (QQRQQQQLPQQQQQQP) shows a compositional bias: low complexity. Ser1284 carries the phosphoserine modification.

Belongs to the GIGYF family. As to quaternary structure, component of the 4EHP-GYF2 complex, at least composed of EIF4E2, GIGYF2 and ZNF598. Interacts (via the 4EHP-binding motif) with EIF4E2; the interaction is direct. Interacts with ZFP36/TTP (via P-P-P-P-G repeats); the interaction is direct. Interacts with GRB10. Interacts (via DDX6 motif) with DDX6 (via RecA-like domain 2). In terms of assembly, (Microbial infection) Interacts with SARS coronavirus-2/SARS-CoV-2 non-structural protein 2 (nsp2); the interaction enhances GIGYF2 binding to EIF4E2.

Key component of the 4EHP-GYF2 complex, a multiprotein complex that acts as a repressor of translation initiation. In the 4EHP-GYF2 complex, acts as a factor that bridges EIF4E2 to ZFP36/TTP, linking translation repression with mRNA decay. Also recruits and bridges the association of the 4EHP complex with the decapping effector protein DDX6, which is required for the ZFP36/TTP-mediated down-regulation of AU-rich mRNA. May act cooperatively with GRB10 to regulate tyrosine kinase receptor signaling, including IGF1 and insulin receptors. In association with EIF4E2, assists ribosome-associated quality control (RQC) by sequestering the mRNA cap, blocking ribosome initiation and decreasing the translational load on problematic messages. Part of a pathway that works in parallel to RQC-mediated degradation of the stalled nascent polypeptide. GIGYF2 and EIF4E2 work downstream and independently of ZNF598, which seems to work as a scaffold that can recruit them to faulty mRNA even if alternative recruitment mechanisms may exist. Functionally, (Microbial infection) Upon SARS coronavirus-2/SARS-CoV-2 infection, the interaction with non-structural protein 2 (nsp2) enhances GIGYF2 binding to EIF4E2 and increases repression of translation initiation of genes involved in antiviral innate immune response such as IFNB1. This chain is GRB10-interacting GYF protein 2, found in Homo sapiens (Human).